The following is a 137-amino-acid chain: Histone H2B (137 aa).

The span at 1–10 shows a compositional bias: basic and acidic residues; the sequence is MAPKAADKKP. The disordered stretch occupies residues 1–45; the sequence is MAPKAADKKPASKAPATASKAPEKKDAGKKTAPSGDKKKRTKARK. Lys8 and Lys9 each carry N6-acetyllysine; alternate. Residues Lys8 and Lys9 each participate in a glycyl lysine isopeptide (Lys-Gly) (interchain with G-Cter in SUMO); alternate cross-link. A Phosphoserine modification is found at Ser12. Lys13 is subject to N6-acetyllysine. Lys24 is subject to N6-acetyllysine; alternate. Lys24 participates in a covalent cross-link: Glycyl lysine isopeptide (Lys-Gly) (interchain with G-Cter in SUMO); alternate. A Glycyl lysine isopeptide (Lys-Gly) (interchain with G-Cter in SUMO) cross-link involves residue Lys25. Residue Lys131 forms a Glycyl lysine isopeptide (Lys-Gly) (interchain with G-Cter in ubiquitin) linkage.

The protein belongs to the histone H2B family. The nucleosome is a histone octamer containing two molecules each of H2A, H2B, H3 and H4 assembled in one H3-H4 heterotetramer and two H2A-H2B heterodimers. The octamer wraps approximately 147 bp of DNA. In terms of processing, monoubiquitinated by the UBC2-BRE1 complex to form H2BK123ub1. H2BK123ub1 gives a specific tag for epigenetic transcriptional activation and is also prerequisite for H3K4me and H3K79me formation. H2BK123ub1 also modulates the formation of double-strand breaks during meiosis and is a prerequisite for DNA-damage checkpoint activation. Post-translationally, phosphorylated to form H2BS10ph during progression through meiotic prophase. May be correlated with chromosome condensation. Acetylated by GCN5 to form H2BK11ac and H2BK16ac. H2BK16ac can also be formed by ESA1. Acetylation of N-terminal lysines and particularly formation of H2BK11acK16ac has a positive effect on transcription. In terms of processing, sumoylation to form H2BK6su or H2BK7su, and probably also H2BK16su or H2BK17su, occurs preferentially near the telomeres and represses gene transcription.

The protein resides in the nucleus. It localises to the chromosome. In terms of biological role, core component of nucleosome. Nucleosomes wrap and compact DNA into chromatin, limiting DNA accessibility to the cellular machineries which require DNA as a template. Histones thereby play a central role in transcription regulation, DNA repair, DNA replication and chromosomal stability. DNA accessibility is regulated via a complex set of post-translational modifications of histones, also called histone code, and nucleosome remodeling. This Chaetomium globosum (strain ATCC 6205 / CBS 148.51 / DSM 1962 / NBRC 6347 / NRRL 1970) (Soil fungus) protein is Histone H2B (HTB1).